The sequence spans 1179 residues: ATP-dependent helicase/deoxyribonuclease subunit B (1179 aa).

It belongs to the helicase family. AddB/RexB type 2 subfamily. As to quaternary structure, heterodimer of AddA and RexB. It depends on Mg(2+) as a cofactor.

In terms of biological role, the heterodimer acts as both an ATP-dependent DNA helicase and an ATP-dependent, dual-direction single-stranded exonuclease. Recognizes the chi site generating a DNA molecule suitable for the initiation of homologous recombination. This subunit has 5' -&gt; 3' nuclease activity but not helicase activity. The polypeptide is ATP-dependent helicase/deoxyribonuclease subunit B (Lacticaseibacillus paracasei (strain ATCC 334 / BCRC 17002 / CCUG 31169 / CIP 107868 / KCTC 3260 / NRRL B-441) (Lactobacillus paracasei)).